The primary structure comprises 155 residues: Small ribosomal subunit protein uS10m (155 aa).

It belongs to the universal ribosomal protein uS10 family. Component of the mitochondrial ribosome small subunit (28S) which comprises a 12S rRNA and about 30 distinct proteins.

The protein localises to the mitochondrion. The polypeptide is Small ribosomal subunit protein uS10m (Mrps10) (Rattus norvegicus (Rat)).